The primary structure comprises 138 residues: ATP synthase epsilon chain (138 aa).

Belongs to the ATPase epsilon chain family. In terms of assembly, F-type ATPases have 2 components, CF(1) - the catalytic core - and CF(0) - the membrane proton channel. CF(1) has five subunits: alpha(3), beta(3), gamma(1), delta(1), epsilon(1). CF(0) has three main subunits: a, b and c.

The protein localises to the cell inner membrane. Produces ATP from ADP in the presence of a proton gradient across the membrane. This chain is ATP synthase epsilon chain, found in Endomicrobium trichonymphae.